We begin with the raw amino-acid sequence, 209 residues long: High frequency lysogenization protein HflD homolog (209 aa).

The protein belongs to the HflD family.

It localises to the cytoplasm. Its subcellular location is the cell inner membrane. The polypeptide is High frequency lysogenization protein HflD homolog (Halorhodospira halophila (strain DSM 244 / SL1) (Ectothiorhodospira halophila (strain DSM 244 / SL1))).